A 137-amino-acid chain; its full sequence is Putative pre-16S rRNA nuclease (137 aa).

Belongs to the YqgF nuclease family.

It is found in the cytoplasm. Could be a nuclease involved in processing of the 5'-end of pre-16S rRNA. The polypeptide is Putative pre-16S rRNA nuclease (Oceanobacillus iheyensis (strain DSM 14371 / CIP 107618 / JCM 11309 / KCTC 3954 / HTE831)).